Consider the following 179-residue polypeptide: Large ribosomal subunit protein uL5 (179 aa).

The protein belongs to the universal ribosomal protein uL5 family. Part of the 50S ribosomal subunit; part of the 5S rRNA/L5/L18/L25 subcomplex. Contacts the 5S rRNA and the P site tRNA. Forms a bridge to the 30S subunit in the 70S ribosome.

This is one of the proteins that bind and probably mediate the attachment of the 5S RNA into the large ribosomal subunit, where it forms part of the central protuberance. In the 70S ribosome it contacts protein S13 of the 30S subunit (bridge B1b), connecting the 2 subunits; this bridge is implicated in subunit movement. Contacts the P site tRNA; the 5S rRNA and some of its associated proteins might help stabilize positioning of ribosome-bound tRNAs. This Francisella tularensis subsp. mediasiatica (strain FSC147) protein is Large ribosomal subunit protein uL5.